The following is a 130-amino-acid chain: Histone H2A type 1 (130 aa).

Residues 1–22 are disordered; the sequence is MSGRGKQGGKTRAKAKTRSSRA. S2 is subject to N-acetylserine. The residue at position 2 (S2) is a Phosphoserine. Position 6 is an N6-(2-hydroxyisobutyryl)lysine (K6). N6-acetyllysine is present on K6. Positions 7–19 are enriched in basic residues; the sequence is QGGKTRAKAKTRS. K10 is modified (N6-(2-hydroxyisobutyryl)lysine; alternate). K10 carries the post-translational modification N6-lactoyllysine; alternate. K10 is modified (N6-succinyllysine). Glycyl lysine isopeptide (Lys-Gly) (interchain with G-Cter in ubiquitin) cross-links involve residues K14 and K16. At K37 the chain carries N6-(2-hydroxyisobutyryl)lysine; alternate. N6-(2-hydroxyisobutyryl)lysine is present on residues K75 and K76. K96 carries the N6-(2-hydroxyisobutyryl)lysine; alternate modification. Position 96 is an N6-succinyllysine (K96). K96 carries the N6-glutaryllysine; alternate modification. Q105 bears the N5-methylglutamine mark. K119 is subject to N6-(2-hydroxyisobutyryl)lysine; alternate. An N6-glutaryllysine; alternate modification is found at K119. A Glycyl lysine isopeptide (Lys-Gly) (interchain with G-Cter in ubiquitin) cross-link involves residue K120.

It belongs to the histone H2A family. The nucleosome is a histone octamer containing two molecules each of H2A, H2B, H3 and H4 assembled in one H3-H4 heterotetramer and two H2A-H2B heterodimers. The octamer wraps approximately 147 bp of DNA. In terms of processing, monoubiquitination of Lys-120 (H2AK119Ub) gives a specific tag for epigenetic transcriptional repression. Following DNA double-strand breaks (DSBs), it is ubiquitinated through 'Lys-63' linkage of ubiquitin moieties, leading to the recruitment of repair proteins to sites of DNA damage. H2AK119Ub and ionizing radiation-induced 'Lys-63'-linked ubiquitination are distinct events. Post-translationally, phosphorylation on Ser-2 is enhanced during mitosis. Phosphorylation on Ser-2 directly represses transcription. Glutamine methylation at Gln-105 (H2AQ104me) by FBL is specifically dedicated to polymerase I. It is present at 35S ribosomal DNA locus and impairs binding of the FACT complex.

The protein localises to the nucleus. The protein resides in the chromosome. Functionally, core component of nucleosome. Nucleosomes wrap and compact DNA into chromatin, limiting DNA accessibility to the cellular machineries which require DNA as a template. Histones thereby play a central role in transcription regulation, DNA repair, DNA replication and chromosomal stability. DNA accessibility is regulated via a complex set of post-translational modifications of histones, also called histone code, and nucleosome remodeling. The chain is Histone H2A type 1 from Xenopus laevis (African clawed frog).